Here is a 408-residue protein sequence, read N- to C-terminus: Argininosuccinate synthase (408 aa).

ATP contacts are provided by residues 11–19 (AYSGGLDTS) and A38. L-citrulline-binding residues include Y91 and S96. Position 121 (G121) interacts with ATP. The L-aspartate site is built by T123, N127, and D128. An L-citrulline-binding site is contributed by N127. R131, S182, S191, E267, and Y279 together coordinate L-citrulline.

It belongs to the argininosuccinate synthase family. Type 1 subfamily. In terms of assembly, homotetramer.

It is found in the cytoplasm. The enzyme catalyses L-citrulline + L-aspartate + ATP = 2-(N(omega)-L-arginino)succinate + AMP + diphosphate + H(+). It functions in the pathway amino-acid biosynthesis; L-arginine biosynthesis; L-arginine from L-ornithine and carbamoyl phosphate: step 2/3. In Zymomonas mobilis subsp. mobilis (strain ATCC 31821 / ZM4 / CP4), this protein is Argininosuccinate synthase.